The following is a 397-amino-acid chain: Argininosuccinate synthase (397 aa).

Residue 9–17 (AYSGGLDTS) participates in ATP binding. Residue Tyr-87 participates in L-citrulline binding. Gly-117 is a binding site for ATP. Thr-119, Asn-123, and Asp-124 together coordinate L-aspartate. Asn-123 lines the L-citrulline pocket. Positions 127, 175, 184, 257, and 269 each coordinate L-citrulline.

The protein belongs to the argininosuccinate synthase family. Type 1 subfamily. In terms of assembly, homotetramer.

Its subcellular location is the cytoplasm. The enzyme catalyses L-citrulline + L-aspartate + ATP = 2-(N(omega)-L-arginino)succinate + AMP + diphosphate + H(+). The protein operates within amino-acid biosynthesis; L-arginine biosynthesis; L-arginine from L-ornithine and carbamoyl phosphate: step 2/3. In Dictyoglomus turgidum (strain DSM 6724 / Z-1310), this protein is Argininosuccinate synthase.